The following is a 147-amino-acid chain: Hemoglobin subunit beta (147 aa).

V2 bears the N-acetylvaline mark. The Globin domain occupies 3 to 147 (HLTGEEKAAV…VANALAHKYH (145 aa)). The residue at position 13 (T13) is a Phosphothreonine. S45 carries the phosphoserine modification. An N6-acetyllysine modification is found at K60. Residue H64 coordinates heme b. K83 carries the post-translational modification N6-acetyllysine. H93 serves as a coordination point for heme b. C94 carries the post-translational modification S-nitrosocysteine. K145 is modified (N6-acetyllysine).

Belongs to the globin family. In terms of assembly, heterotetramer of two alpha chains and two beta chains. As to expression, red blood cells.

Functionally, involved in oxygen transport from the lung to the various peripheral tissues. The chain is Hemoglobin subunit beta (HBB) from Ailuropoda melanoleuca (Giant panda).